Reading from the N-terminus, the 240-residue chain is Eukaryotic translation initiation factor 3 subunit K (240 aa).

Residues 41–221 (YDKDIVLTIL…TIKTRNIDEK (181 aa)) form the PCI domain.

It belongs to the eIF-3 subunit K family. Component of the eukaryotic translation initiation factor 3 (eIF-3) complex.

The protein resides in the cytoplasm. Its function is as follows. Component of the eukaryotic translation initiation factor 3 (eIF-3) complex, which is involved in protein synthesis of a specialized repertoire of mRNAs and, together with other initiation factors, stimulates binding of mRNA and methionyl-tRNAi to the 40S ribosome. The eIF-3 complex specifically targets and initiates translation of a subset of mRNAs involved in cell proliferation. The protein is Eukaryotic translation initiation factor 3 subunit K of Caenorhabditis briggsae.